Here is a 606-residue protein sequence, read N- to C-terminus: Vitamin B12 transporter BtuB (606 aa).

A signal peptide spans 1 to 22 (MQKSLLAIAMASLLTPVSYLHA). Positions 29 to 36 (DTVVVTAN) match the TonB box motif. A TBDR plug domain is found at 41 to 153 (PLAEVIASTT…IAGVINVITT (113 aa)). The region spanning 158 to 606 (SEGSVVSLGA…RYFANLTYQF (449 aa)) is the TBDR beta-barrel domain. The TonB C-terminal box signature appears at 589 to 606 (LSYNAPERRYFANLTYQF).

This sequence belongs to the TonB-dependent receptor family. BtuB (TC 1.B.14.3.1) subfamily.

It localises to the cell outer membrane. Functionally, involved in the active translocation of vitamin B12 (cyanocobalamin) across the outer membrane to the periplasmic space. It derives its energy for transport by interacting with the trans-periplasmic membrane protein TonB. The sequence is that of Vitamin B12 transporter BtuB from Vibrio vulnificus (strain CMCP6).